We begin with the raw amino-acid sequence, 720 residues long: Zinc finger protein 408 (720 aa).

The segment at 201–350 (VQQEVASPGE…GPAGSSPKQG (150 aa)) is disordered. A compositionally biased stretch (polar residues) spans 275-285 (LQSNSATQQDP). A compositionally biased stretch (low complexity) spans 287–296 (GSGASFSSSA). T322 bears the Phosphothreonine mark. C2H2-type zinc fingers lie at residues 353–375 (YRCG…AFVH), 381–403 (FLCT…MLGH), 409–431 (FPCP…QVVH), 437–459 (FACD…RKTH), 468–490 (CPCP…MRLH), 496–518 (FLCP…LRLH), 524–546 (YRCP…LISH), 551–573 (HLCP…ERLH), 579–601 (FPCP…LKSH), and 607–629 (YRCP…QLSH).

Highest expression is observed in adult retina; abundantly expressed in the fetal eye. In the retina, it is detected in the outer nuclear layer, especially cone and rod photoreceptor cells, ganglion cell layer and both outer and inner plexiform layers (at protein level). Expressed in retinal blood vessels (at protein level).

It is found in the nucleus. In terms of biological role, may be involved in transcriptional regulation. This is Zinc finger protein 408 (ZNF408) from Homo sapiens (Human).